A 361-amino-acid polypeptide reads, in one-letter code: Chorismate synthase (361 aa).

NADP(+) contacts are provided by R48 and R54. FMN-binding positions include R131–S133, N243–A244, G287, K302–S306, and R328.

The protein belongs to the chorismate synthase family. Homotetramer. It depends on FMNH2 as a cofactor.

It catalyses the reaction 5-O-(1-carboxyvinyl)-3-phosphoshikimate = chorismate + phosphate. It functions in the pathway metabolic intermediate biosynthesis; chorismate biosynthesis; chorismate from D-erythrose 4-phosphate and phosphoenolpyruvate: step 7/7. Its function is as follows. Catalyzes the anti-1,4-elimination of the C-3 phosphate and the C-6 proR hydrogen from 5-enolpyruvylshikimate-3-phosphate (EPSP) to yield chorismate, which is the branch point compound that serves as the starting substrate for the three terminal pathways of aromatic amino acid biosynthesis. This reaction introduces a second double bond into the aromatic ring system. This chain is Chorismate synthase, found in Rhodopseudomonas palustris (strain BisA53).